The chain runs to 169 residues: Large ribosomal subunit protein bL17 (169 aa).

Residues 124-169 (EKAVKRQDRSRRVKGSKKAIDEKTSDDSASVEAAPAAPEAEEKKDA) form a disordered region. A compositionally biased stretch (basic residues) spans 131-140 (DRSRRVKGSK). Positions 150 to 161 (DSASVEAAPAAP) are enriched in low complexity.

This sequence belongs to the bacterial ribosomal protein bL17 family. In terms of assembly, part of the 50S ribosomal subunit. Contacts protein L32.

The chain is Large ribosomal subunit protein bL17 from Chloroherpeton thalassium (strain ATCC 35110 / GB-78).